A 478-amino-acid chain; its full sequence is Probable glycine dehydrogenase (decarboxylating) subunit 2 (478 aa).

Lys264 carries the N6-(pyridoxal phosphate)lysine modification.

It belongs to the GcvP family. C-terminal subunit subfamily. As to quaternary structure, the glycine cleavage system is composed of four proteins: P, T, L and H. In this organism, the P 'protein' is a heterodimer of two subunits. Pyridoxal 5'-phosphate is required as a cofactor.

The catalysed reaction is N(6)-[(R)-lipoyl]-L-lysyl-[glycine-cleavage complex H protein] + glycine + H(+) = N(6)-[(R)-S(8)-aminomethyldihydrolipoyl]-L-lysyl-[glycine-cleavage complex H protein] + CO2. The glycine cleavage system catalyzes the degradation of glycine. The P protein binds the alpha-amino group of glycine through its pyridoxal phosphate cofactor; CO(2) is released and the remaining methylamine moiety is then transferred to the lipoamide cofactor of the H protein. The protein is Probable glycine dehydrogenase (decarboxylating) subunit 2 of Endomicrobium trichonymphae.